The chain runs to 214 residues: Ribonuclease HII (214 aa).

The 189-residue stretch at 26 to 214 (EIVCGVDEAG…PVREAFDLIR (189 aa)) folds into the RNase H type-2 domain. A divalent metal cation contacts are provided by Asp32, Glu33, and Asp124.

The protein belongs to the RNase HII family. The cofactor is Mn(2+). It depends on Mg(2+) as a cofactor.

Its subcellular location is the cytoplasm. It carries out the reaction Endonucleolytic cleavage to 5'-phosphomonoester.. Its function is as follows. Endonuclease that specifically degrades the RNA of RNA-DNA hybrids. The protein is Ribonuclease HII of Burkholderia thailandensis (strain ATCC 700388 / DSM 13276 / CCUG 48851 / CIP 106301 / E264).